The following is a 506-amino-acid chain: Asparagine--tRNA ligase (506 aa).

This sequence belongs to the class-II aminoacyl-tRNA synthetase family. Homodimer.

It localises to the cytoplasm. The catalysed reaction is tRNA(Asn) + L-asparagine + ATP = L-asparaginyl-tRNA(Asn) + AMP + diphosphate + H(+). The chain is Asparagine--tRNA ligase from Onion yellows phytoplasma (strain OY-M).